The primary structure comprises 306 residues: Elongation factor Ts (306 aa).

The segment at 80-83 is involved in Mg(2+) ion dislocation from EF-Tu; that stretch reads TDFV.

It belongs to the EF-Ts family.

It localises to the cytoplasm. Functionally, associates with the EF-Tu.GDP complex and induces the exchange of GDP to GTP. It remains bound to the aminoacyl-tRNA.EF-Tu.GTP complex up to the GTP hydrolysis stage on the ribosome. This is Elongation factor Ts from Methylorubrum extorquens (strain CM4 / NCIMB 13688) (Methylobacterium extorquens).